An 81-amino-acid polypeptide reads, in one-letter code: Putative truncated GMC-type inactive oxidoreductase R833 (81 aa).

The protein belongs to the GMC oxidoreductase family.

This Acanthamoeba polyphaga mimivirus (APMV) protein is Putative truncated GMC-type inactive oxidoreductase R833.